Here is a 1913-residue protein sequence, read N- to C-terminus: GREB1-like protein (1913 aa).

The segment covering methionine 86–serine 96 has biased composition (acidic residues). Disordered regions lie at residues methionine 86–proline 111, asparagine 281–proline 309, glutamate 1097–isoleucine 1157, and aspartate 1179–serine 1207. Residues lysine 289 to glycine 301 show a composition bias toward low complexity. A compositionally biased stretch (polar residues) spans proline 1118–isoleucine 1157. The span at serine 1187–serine 1200 shows a compositional bias: low complexity. The helical transmembrane segment at glycine 1832–leucine 1852 threads the bilayer.

The protein belongs to the GREB1 family. Expressed in the inner ear, with a high presence in the spiral ganglia, cochlear nerve bundles, and hair cells.

The protein localises to the membrane. Its function is as follows. Plays a major role in early metanephros and genital development. In Mus musculus (Mouse), this protein is GREB1-like protein (Greb1l).